A 230-amino-acid polypeptide reads, in one-letter code: Flagellar L-ring protein (230 aa).

A signal peptide spans 1–18 (MNRLNIAVSCLATALLFG). A lipid anchor (N-palmitoyl cysteine) is attached at Cys19. Cys19 is lipidated: S-diacylglycerol cysteine.

Belongs to the FlgH family. In terms of assembly, the basal body constitutes a major portion of the flagellar organelle and consists of four rings (L,P,S, and M) mounted on a central rod.

It is found in the cell outer membrane. The protein resides in the bacterial flagellum basal body. Its function is as follows. Assembles around the rod to form the L-ring and probably protects the motor/basal body from shearing forces during rotation. In Legionella pneumophila (strain Corby), this protein is Flagellar L-ring protein.